The sequence spans 121 residues: Large ribosomal subunit protein bL20 (121 aa).

This sequence belongs to the bacterial ribosomal protein bL20 family.

Functionally, binds directly to 23S ribosomal RNA and is necessary for the in vitro assembly process of the 50S ribosomal subunit. It is not involved in the protein synthesizing functions of that subunit. In Roseobacter denitrificans (strain ATCC 33942 / OCh 114) (Erythrobacter sp. (strain OCh 114)), this protein is Large ribosomal subunit protein bL20.